Consider the following 450-residue polypeptide: Divalent metal cation transporter MntH (450 aa).

11 helical membrane passes run 34 to 54, 61 to 81, 108 to 128, 141 to 161, 170 to 190, 212 to 232, 263 to 283, 305 to 325, 361 to 381, 383 to 403, and 422 to 442; these read LSFL…GNWI, AQYG…AMLL, IAII…IAEV, IPLI…LFIM, AIVG…VYIS, GILY…NLYL, IQLS…ASLF, PVLG…ALLA, SLAV…AAKI, QLLV…LIPL, and VNII…YLIV.

Belongs to the NRAMP family.

The protein resides in the cell membrane. Functionally, h(+)-stimulated, divalent metal cation uptake system. The protein is Divalent metal cation transporter MntH of Staphylococcus aureus (strain JH1).